A 97-amino-acid polypeptide reads, in one-letter code: UPF0223 protein lp_2149 (97 aa).

It belongs to the UPF0223 family.

In Lactiplantibacillus plantarum (strain ATCC BAA-793 / NCIMB 8826 / WCFS1) (Lactobacillus plantarum), this protein is UPF0223 protein lp_2149.